Here is a 73-residue protein sequence, read N- to C-terminus: Translation initiation factor IF-1 (73 aa).

The 73-residue stretch at 1 to 73 (MAKKDGVIEI…TRGRIVYRYK (73 aa)) folds into the S1-like domain.

It belongs to the IF-1 family. As to quaternary structure, component of the 30S ribosomal translation pre-initiation complex which assembles on the 30S ribosome in the order IF-2 and IF-3, IF-1 and N-formylmethionyl-tRNA(fMet); mRNA recruitment can occur at any time during PIC assembly.

It is found in the cytoplasm. One of the essential components for the initiation of protein synthesis. Stabilizes the binding of IF-2 and IF-3 on the 30S subunit to which N-formylmethionyl-tRNA(fMet) subsequently binds. Helps modulate mRNA selection, yielding the 30S pre-initiation complex (PIC). Upon addition of the 50S ribosomal subunit IF-1, IF-2 and IF-3 are released leaving the mature 70S translation initiation complex. The protein is Translation initiation factor IF-1 of Clavibacter michiganensis subsp. michiganensis (strain NCPPB 382).